Reading from the N-terminus, the 330-residue chain is Phenylalanine--tRNA ligase alpha subunit (330 aa).

Glu257 is a binding site for Mg(2+).

Belongs to the class-II aminoacyl-tRNA synthetase family. Phe-tRNA synthetase alpha subunit type 1 subfamily. In terms of assembly, tetramer of two alpha and two beta subunits. Mg(2+) serves as cofactor.

The protein localises to the cytoplasm. It carries out the reaction tRNA(Phe) + L-phenylalanine + ATP = L-phenylalanyl-tRNA(Phe) + AMP + diphosphate + H(+). This chain is Phenylalanine--tRNA ligase alpha subunit, found in Acaryochloris marina (strain MBIC 11017).